Reading from the N-terminus, the 172-residue chain is Translation initiation factor IF-3 (172 aa).

The protein belongs to the IF-3 family. In terms of assembly, monomer.

It localises to the cytoplasm. Its function is as follows. IF-3 binds to the 30S ribosomal subunit and shifts the equilibrium between 70S ribosomes and their 50S and 30S subunits in favor of the free subunits, thus enhancing the availability of 30S subunits on which protein synthesis initiation begins. In Campylobacter jejuni subsp. doylei (strain ATCC BAA-1458 / RM4099 / 269.97), this protein is Translation initiation factor IF-3.